A 316-amino-acid polypeptide reads, in one-letter code: 4-hydroxy-3-methylbut-2-enyl diphosphate reductase (316 aa).

[4Fe-4S] cluster is bound at residue cysteine 18. Residues histidine 47 and histidine 80 each coordinate (2E)-4-hydroxy-3-methylbut-2-enyl diphosphate. The dimethylallyl diphosphate site is built by histidine 47 and histidine 80. Positions 47 and 80 each coordinate isopentenyl diphosphate. Cysteine 102 serves as a coordination point for [4Fe-4S] cluster. Histidine 130 serves as a coordination point for (2E)-4-hydroxy-3-methylbut-2-enyl diphosphate. Histidine 130 lines the dimethylallyl diphosphate pocket. Histidine 130 contacts isopentenyl diphosphate. The Proton donor role is filled by glutamate 132. Threonine 171 lines the (2E)-4-hydroxy-3-methylbut-2-enyl diphosphate pocket. Residue cysteine 201 participates in [4Fe-4S] cluster binding. Serine 229, serine 230, asparagine 231, and serine 274 together coordinate (2E)-4-hydroxy-3-methylbut-2-enyl diphosphate. Residues serine 229, serine 230, asparagine 231, and serine 274 each contribute to the dimethylallyl diphosphate site. Isopentenyl diphosphate contacts are provided by serine 229, serine 230, asparagine 231, and serine 274.

This sequence belongs to the IspH family. Requires [4Fe-4S] cluster as cofactor.

The enzyme catalyses isopentenyl diphosphate + 2 oxidized [2Fe-2S]-[ferredoxin] + H2O = (2E)-4-hydroxy-3-methylbut-2-enyl diphosphate + 2 reduced [2Fe-2S]-[ferredoxin] + 2 H(+). The catalysed reaction is dimethylallyl diphosphate + 2 oxidized [2Fe-2S]-[ferredoxin] + H2O = (2E)-4-hydroxy-3-methylbut-2-enyl diphosphate + 2 reduced [2Fe-2S]-[ferredoxin] + 2 H(+). The protein operates within isoprenoid biosynthesis; dimethylallyl diphosphate biosynthesis; dimethylallyl diphosphate from (2E)-4-hydroxy-3-methylbutenyl diphosphate: step 1/1. Its pathway is isoprenoid biosynthesis; isopentenyl diphosphate biosynthesis via DXP pathway; isopentenyl diphosphate from 1-deoxy-D-xylulose 5-phosphate: step 6/6. Functionally, catalyzes the conversion of 1-hydroxy-2-methyl-2-(E)-butenyl 4-diphosphate (HMBPP) into a mixture of isopentenyl diphosphate (IPP) and dimethylallyl diphosphate (DMAPP). Acts in the terminal step of the DOXP/MEP pathway for isoprenoid precursor biosynthesis. This chain is 4-hydroxy-3-methylbut-2-enyl diphosphate reductase, found in Paracoccus denitrificans (strain Pd 1222).